The chain runs to 127 residues: Movement protein TGB2 (127 aa).

The Cytoplasmic portion of the chain corresponds to 1-24 (MSLSHGTGAPAISTPLTLRPPPDN). Residues 25 to 45 (TKAILTIAIGIAASLVFFMLT) form a helical membrane-spanning segment. Residues 46 to 85 (RNNLPHVGDNIHSLPHGGSYIDGTKSINYRPPASRYPSSN) lie on the Lumenal side of the membrane. Residues 86–106 (LLAFAPPILAAVLFFLTQPYL) traverse the membrane as a helical segment. Over 107–127 (ATRRSRCVRCFVVHGACTNHT) the chain is Cytoplasmic.

Belongs to the Tymovirales TGBp2 protein family.

The protein localises to the host endoplasmic reticulum membrane. In terms of biological role, plays a role in viral cell-to-cell propagation, by facilitating genome transport to neighboring plant cells through plasmosdesmata,. The protein is Movement protein TGB2 of Setaria italica (Foxtail millet).